We begin with the raw amino-acid sequence, 166 residues long: UPF0304 protein VF_1794 (166 aa).

The protein belongs to the UPF0304 family.

This Aliivibrio fischeri (strain ATCC 700601 / ES114) (Vibrio fischeri) protein is UPF0304 protein VF_1794.